The chain runs to 92 residues: MTDMTERVGTQVTFEELSALMKRTAGVHVEPPDLRARAEEGFDGFGLDSLGLLGIVAELEKKHGVGLPEQVERCKTPAEFLAQVNATLRTAV.

The region spanning 11-92 (QVTFEELSAL…QVNATLRTAV (82 aa)) is the Carrier domain. The residue at position 49 (Ser-49) is an O-(pantetheine 4'-phosphoryl)serine.

4'-phosphopantetheine is transferred from CoA to a specific serine of the apo-ACP-like protein.

In terms of biological role, involved in developmentally regulated synthesis of a compound biosynthetically related to polyketide antibiotics which is essential for spore color in Streptomyces halstedii. In Streptomyces halstedii, this protein is Probable acyl carrier protein (sch3).